A 402-amino-acid chain; its full sequence is CMP-sialic acid transporter 3 (402 aa).

The Cytoplasmic portion of the chain corresponds to 1-42; sequence MSGEVECRVCHAKVQVPMAAAAVSKAYDIHRSSVSSRQRALN. A helical transmembrane segment spans residues 43–63; the sequence is VLLVSGDCVLAGLQPILVYMC. At 64 to 73 the chain is on the lumenal side; the sequence is KVDGKFKFSP. A helical membrane pass occupies residues 74 to 94; the sequence is VSVNFLTEITKIIFAIIMLCI. Residues 95-118 are Cytoplasmic-facing; sequence QARRLKVGEKPFLTVSTFMQAARN. Residues 119 to 139 form a helical membrane-spanning segment; sequence NVLLAVPALFYAINNYMKFVM. The Lumenal segment spans residues 140 to 146; that stretch reads QLYFNPA. The chain crosses the membrane as a helical span at residues 147-167; the sequence is TVKMLGNLKVLVIAVLLKVIM. The Cytoplasmic segment spans residues 168 to 170; the sequence is RRR. Residues 171–191 traverse the membrane as a helical segment; sequence FSTIQWEALALLLIGISVNQL. At 192 to 202 the chain is on the lumenal side; it reads KSLPEGSSTLG. Residues 203–223 traverse the membrane as a helical segment; sequence LPVAAGAYLYTLFFVTVPALA. Residues 224–243 are Cytoplasmic-facing; sequence SVYNEKALKSQFDTSIYLQN. A helical transmembrane segment spans residues 244–264; the sequence is LFLYGYGAIFNFLGLVITAII. Residues 265–280 lie on the Lumenal side of the membrane; that stretch reads QGPSSFNILEGHSKAT. The helical transmembrane segment at 281–301 threads the bilayer; that stretch reads MFLICNNAAQGILSSFFFKYA. The Cytoplasmic portion of the chain corresponds to 302 to 321; the sequence is DTILKKYSSTIATIFTGVAS. Residues 322–342 traverse the membrane as a helical segment; the sequence is AVLFGHTLTINFVLAISIVII. Over 343–402 the chain is Lumenal; the sequence is SMHQYLSNQIKDEVPSSKIEMGDAHEHRSKESVVVNVSDSIATEAKHRHGTDERQPLLPV.

It belongs to the nucleotide-sugar transporter family. CMP-Sialate:CMP antiporter (TC 2.A.7.12) subfamily.

The protein localises to the golgi apparatus membrane. In terms of biological role, sugar transporter involved in the transport of CMP-sialic acid from the cytoplasm into the Golgi. May transport important nucleotide sugars such as CMP-Kdo (2-keto-3-deoxy-D-manno-octulosonic acid) in physiological conditions. The sequence is that of CMP-sialic acid transporter 3 from Oryza sativa subsp. indica (Rice).